Reading from the N-terminus, the 372-residue chain is Putative aminopeptidase SgcX (372 aa).

A divalent metal cation-binding residues include His67 and Asp180. Catalysis depends on Glu212, which acts as the Proton acceptor. Residues Glu213, Asp235, and His329 each contribute to the a divalent metal cation site.

The protein belongs to the peptidase M42 family. It depends on a divalent metal cation as a cofactor.

This Salmonella typhimurium (strain LT2 / SGSC1412 / ATCC 700720) protein is Putative aminopeptidase SgcX (sgcX).